A 343-amino-acid polypeptide reads, in one-letter code: S-adenosylmethionine:tRNA ribosyltransferase-isomerase (343 aa).

It belongs to the QueA family. In terms of assembly, monomer.

The protein resides in the cytoplasm. The catalysed reaction is 7-aminomethyl-7-carbaguanosine(34) in tRNA + S-adenosyl-L-methionine = epoxyqueuosine(34) in tRNA + adenine + L-methionine + 2 H(+). It functions in the pathway tRNA modification; tRNA-queuosine biosynthesis. Its function is as follows. Transfers and isomerizes the ribose moiety from AdoMet to the 7-aminomethyl group of 7-deazaguanine (preQ1-tRNA) to give epoxyqueuosine (oQ-tRNA). The chain is S-adenosylmethionine:tRNA ribosyltransferase-isomerase from Dehalococcoides mccartyi (strain ATCC BAA-2100 / JCM 16839 / KCTC 5957 / BAV1).